A 280-amino-acid chain; its full sequence is MKKLQLLAPAKVNYRLDVLGKRPDGYHELRMIMQRVDLCDEIEIALSDSPGIRVTCGRKGVPDGPGNIAWRAADALLKLSDKEVGIEITIAKKIPVGAGLGGGSSDAATVLMGVNELLELGLTDERLMEIGVKLGADVPFFVFKKPALAEGIGDRLTALEEVPSLWVVLVNPGIHVSTAWVYQNLRLTTPDPATIIPRSYSSLNEVCELLSNDLEPVTCGRFPLVSELKEVLLTAGARGSLMSGSGSTVFGLFESESAARHAAAEIAKARGWFAAAVRTI.

Lys-11 is a catalytic residue. 95–105 (PVGAGLGGGSS) contacts ATP. Asp-137 is a catalytic residue.

The protein belongs to the GHMP kinase family. IspE subfamily.

The enzyme catalyses 4-CDP-2-C-methyl-D-erythritol + ATP = 4-CDP-2-C-methyl-D-erythritol 2-phosphate + ADP + H(+). Its pathway is isoprenoid biosynthesis; isopentenyl diphosphate biosynthesis via DXP pathway; isopentenyl diphosphate from 1-deoxy-D-xylulose 5-phosphate: step 3/6. In terms of biological role, catalyzes the phosphorylation of the position 2 hydroxy group of 4-diphosphocytidyl-2C-methyl-D-erythritol. The protein is 4-diphosphocytidyl-2-C-methyl-D-erythritol kinase of Citrifermentans bemidjiense (strain ATCC BAA-1014 / DSM 16622 / JCM 12645 / Bem) (Geobacter bemidjiensis).